The primary structure comprises 264 residues: Chymotrypsin-like protease CTRL-1 (264 aa).

Positions 1–18 (MLLLSLTLSLVLLGSSWG) are cleaved as a signal peptide. A propeptide spans 19 to 33 (CGIPAIKPALSFSQR) (activation peptide). 5 cysteine pairs are disulfide-bonded: Cys-19-Cys-141, Cys-60-Cys-76, Cys-155-Cys-220, Cys-187-Cys-201, and Cys-210-Cys-239. Residues 34 to 262 (IVNGENAVLG…FSTWINQVIA (229 aa)) form the Peptidase S1 domain. His-75 acts as the Charge relay system in catalysis. An N-linked (GlcNAc...) asparagine glycan is attached at Asn-114. Asp-121 serves as the catalytic Charge relay system. Residue Ser-214 is the Charge relay system of the active site.

The protein belongs to the peptidase S1 family.

The sequence is that of Chymotrypsin-like protease CTRL-1 (CTRL) from Homo sapiens (Human).